A 952-amino-acid chain; its full sequence is Leucine--tRNA ligase (952 aa).

The 'HIGH' region signature appears at Pro-66–His-77. Residues Lys-722 to Ser-726 carry the 'KMSKS' region motif. ATP is bound at residue Lys-725.

It belongs to the class-I aminoacyl-tRNA synthetase family.

The protein localises to the cytoplasm. It catalyses the reaction tRNA(Leu) + L-leucine + ATP = L-leucyl-tRNA(Leu) + AMP + diphosphate. In Corynebacterium glutamicum (strain R), this protein is Leucine--tRNA ligase.